Here is a 191-residue protein sequence, read N- to C-terminus: Programmed cell death protein 6 (191 aa).

A2 carries the post-translational modification N-acetylalanine. EF-hand domains follow at residues 23–58 (PDQS…GTWT), 59–89 (PFNP…TGVW), 90–125 (KYIT…FGYR), 126–161 (LSDQ…LQRL), and 162–191 (TDIF…FSIV). The Ca(2+) site is built by D36, D38, S40, V42, and E47. Positions 103, 105, 107, 109, and 114 each coordinate Ca(2+). Mg(2+) contacts are provided by D169, D171, D173, and W175.

In terms of assembly, homodimer and heterodimer; heterodimerizes (via the EF-hand 5) with PEF1. Isoform 1 and isoform 2 self-associate; probably forming homodimers. Interacts with CPNE4 (via VWFA domain). Interacts with PDCD6IP; the interaction is calcium-dependent. Interacts with RBM22. Interacts with PLSCR4. Interacts with ANXA7 and TSG101. Interacts with DAPK1. Interacts with SEC31A; the interaction is calcium-dependent and promotes monoubiquitination of SEC31A. Interacts with ANXA11 (via N-terminus); the interaction is calcium-dependent. Interacts with PLSCR3 (via N-terminus); the interaction is calcium-dependent. Interacts with MCOLN1; the interaction is calcium-dependent. Interacts with KDR; the interaction is calcium-dependent. Interacts with HEBP2; the interaction is calcium-dependent. Interacts with TFG. Isoform 1: Interacts with SHISA5, leading to stabilize it. Isoform 2: Does not interact with SHISA5. Isoform 2: Does not interact with PDCD6IP, TSG101, ANXA7 and ANXA11.

The protein localises to the endoplasmic reticulum membrane. Its subcellular location is the cytoplasmic vesicle. It is found in the COPII-coated vesicle membrane. It localises to the cytoplasm. The protein resides in the nucleus. The protein localises to the endosome. In terms of biological role, calcium sensor that plays a key role in processes such as endoplasmic reticulum (ER)-Golgi vesicular transport, endosomal biogenesis or membrane repair. Acts as an adapter that bridges unrelated proteins or stabilizes weak protein-protein complexes in response to calcium: calcium-binding triggers exposure of apolar surface, promoting interaction with different sets of proteins thanks to 3 different hydrophobic pockets, leading to translocation to membranes. Involved in ER-Golgi transport by promoting the association between PDCD6IP and TSG101, thereby bridging together the ESCRT-III and ESCRT-I complexes. Together with PEF1, acts as a calcium-dependent adapter for the BCR(KLHL12) complex, a complex involved in ER-Golgi transport by regulating the size of COPII coats. In response to cytosolic calcium increase, the heterodimer formed with PEF1 interacts with, and bridges together the BCR(KLHL12) complex and SEC31 (SEC31A or SEC31B), promoting monoubiquitination of SEC31 and subsequent collagen export, which is required for neural crest specification. Involved in the regulation of the distribution and function of MCOLN1 in the endosomal pathway. Promotes localization and polymerization of TFG at endoplasmic reticulum exit site. Required for T-cell receptor-, Fas-, and glucocorticoid-induced apoptosis. May mediate Ca(2+)-regulated signals along the death pathway: interaction with DAPK1 can accelerate apoptotic cell death by increasing caspase-3 activity. Its role in apoptosis may however be indirect, as suggested by knockout experiments. May inhibit KDR/VEGFR2-dependent angiogenesis; the function involves inhibition of VEGF-induced phosphorylation of the Akt signaling pathway. Has a lower Ca(2+) affinity than isoform 1. In Mus musculus (Mouse), this protein is Programmed cell death protein 6 (Pdcd6).